The sequence spans 572 residues: Asparagine synthetase [glutamine-hydrolyzing] 1 (572 aa).

C2 acts as the For GATase activity in catalysis. Residues 2–186 enclose the Glutamine amidotransferase type-2 domain; that stretch reads CGIFAAFRHE…PGHVYDSKTD (185 aa). Residues 49–53, 74–76, and D97 contribute to the L-glutamine site; these read RLAIV and NGE. The Asparagine synthetase domain occupies 194–546; that stretch reads PDWLDEKRIP…QKTVADTVMR (353 aa). Residue L233 participates in ATP binding. S265 carries the post-translational modification Phosphoserine. ATP is bound by residues I292 and 366–367; that span reads SG. At S509 the chain carries Phosphoserine.

It catalyses the reaction L-aspartate + L-glutamine + ATP + H2O = L-asparagine + L-glutamate + AMP + diphosphate + H(+). It functions in the pathway amino-acid biosynthesis; L-asparagine biosynthesis; L-asparagine from L-aspartate (L-Gln route): step 1/1. The sequence is that of Asparagine synthetase [glutamine-hydrolyzing] 1 (ASN1) from Saccharomyces cerevisiae (strain ATCC 204508 / S288c) (Baker's yeast).